A 154-amino-acid chain; its full sequence is Aspartate carbamoyltransferase regulatory chain (154 aa).

Zn(2+)-binding residues include Cys-109, Cys-114, Cys-138, and Cys-141.

Belongs to the PyrI family. Contains catalytic and regulatory chains. Requires Zn(2+) as cofactor.

In terms of biological role, involved in allosteric regulation of aspartate carbamoyltransferase. The chain is Aspartate carbamoyltransferase regulatory chain from Aeromonas salmonicida (strain A449).